Here is a 208-residue protein sequence, read N- to C-terminus: Large ribosomal subunit protein bL25 (208 aa).

The tract at residues 1-21 is disordered; the sequence is MSNEFSLNAEKRDVQGKGASR.

This sequence belongs to the bacterial ribosomal protein bL25 family. CTC subfamily. Part of the 50S ribosomal subunit; part of the 5S rRNA/L5/L18/L25 subcomplex. Contacts the 5S rRNA. Binds to the 5S rRNA independently of L5 and L18.

This is one of the proteins that binds to the 5S RNA in the ribosome where it forms part of the central protuberance. This chain is Large ribosomal subunit protein bL25, found in Hahella chejuensis (strain KCTC 2396).